Here is a 282-residue protein sequence, read N- to C-terminus: Lipoyl synthase (282 aa).

Residues cysteine 37, cysteine 42, cysteine 48, cysteine 63, cysteine 67, cysteine 70, and serine 275 each coordinate [4Fe-4S] cluster. In terms of domain architecture, Radical SAM core spans 49-264 (WSRGTATFMI…RLVGIEKGFR (216 aa)).

Belongs to the radical SAM superfamily. Lipoyl synthase family. [4Fe-4S] cluster is required as a cofactor.

The protein localises to the cytoplasm. It catalyses the reaction [[Fe-S] cluster scaffold protein carrying a second [4Fe-4S](2+) cluster] + N(6)-octanoyl-L-lysyl-[protein] + 2 oxidized [2Fe-2S]-[ferredoxin] + 2 S-adenosyl-L-methionine + 4 H(+) = [[Fe-S] cluster scaffold protein] + N(6)-[(R)-dihydrolipoyl]-L-lysyl-[protein] + 4 Fe(3+) + 2 hydrogen sulfide + 2 5'-deoxyadenosine + 2 L-methionine + 2 reduced [2Fe-2S]-[ferredoxin]. It functions in the pathway protein modification; protein lipoylation via endogenous pathway; protein N(6)-(lipoyl)lysine from octanoyl-[acyl-carrier-protein]: step 2/2. In terms of biological role, catalyzes the radical-mediated insertion of two sulfur atoms into the C-6 and C-8 positions of the octanoyl moiety bound to the lipoyl domains of lipoate-dependent enzymes, thereby converting the octanoylated domains into lipoylated derivatives. This chain is Lipoyl synthase, found in Porphyromonas gingivalis (strain ATCC 33277 / DSM 20709 / CIP 103683 / JCM 12257 / NCTC 11834 / 2561).